A 159-amino-acid chain; its full sequence is Large ribosomal subunit protein uL15 (159 aa).

Basic and acidic residues predominate over residues 1–11 (MKLNELRDNEG). Residues 1–40 (MKLNELRDNEGARYQSKRLGRGIGSGKGKTSGKGVKGQTS) are disordered. Positions 21–35 (RGIGSGKGKTSGKGV) are enriched in gly residues.

This sequence belongs to the universal ribosomal protein uL15 family. In terms of assembly, part of the 50S ribosomal subunit.

Its function is as follows. Binds to the 23S rRNA. This is Large ribosomal subunit protein uL15 from Paramagnetospirillum magneticum (strain ATCC 700264 / AMB-1) (Magnetospirillum magneticum).